The primary structure comprises 308 residues: Putative proline iminopeptidase (308 aa).

In terms of domain architecture, AB hydrolase-1 spans 30-290 (KPVLYIHGGP…LYVTNNAGHS (261 aa)). Ser105 functions as the Nucleophile in the catalytic mechanism. Residue Asp261 is part of the active site. His289 serves as the catalytic Proton donor.

This sequence belongs to the peptidase S33 family.

It localises to the cytoplasm. It catalyses the reaction Release of N-terminal proline from a peptide.. In terms of biological role, specifically catalyzes the removal of N-terminal proline residues from peptides. The chain is Putative proline iminopeptidase (pip) from Mycoplasma genitalium (strain ATCC 33530 / DSM 19775 / NCTC 10195 / G37) (Mycoplasmoides genitalium).